The following is a 308-amino-acid chain: D-alanine--D-alanine ligase (308 aa).

The ATP-grasp domain occupies 103–302 (KTVMATAGVP…FDELVQWMVE (200 aa)). Position 130–184 (130–184 (MAPPYVIKPVADGSSVGVFIVTEDQAHPPQELFRDDWPHGEELLVEKYIAGRELT)) interacts with ATP. The Mg(2+) site is built by Asp-252, Glu-269, and Asn-271.

This sequence belongs to the D-alanine--D-alanine ligase family. It depends on Mg(2+) as a cofactor. Mn(2+) serves as cofactor.

The protein resides in the cytoplasm. It catalyses the reaction 2 D-alanine + ATP = D-alanyl-D-alanine + ADP + phosphate + H(+). Its pathway is cell wall biogenesis; peptidoglycan biosynthesis. Its function is as follows. Cell wall formation. The chain is D-alanine--D-alanine ligase from Afipia carboxidovorans (strain ATCC 49405 / DSM 1227 / KCTC 32145 / OM5) (Oligotropha carboxidovorans).